The chain runs to 390 residues: Elongation factor Tu 2 (390 aa).

Residues 10-201 (KPHVNVGTIG…LDDYVEVPPR (192 aa)) form the tr-type G domain. Residues 19-26 (GHVDHGKT) form a G1 region. 19–26 (GHVDHGKT) lines the GTP pocket. Residue threonine 26 coordinates Mg(2+). A G2 region spans residues 55–59 (GITIA). The interval 76-79 (DCPG) is G3. GTP-binding positions include 76–80 (DCPGH) and 131–134 (NKAD). Residues 131 to 134 (NKAD) are G4. Positions 168–170 (SAL) are G5.

The protein belongs to the TRAFAC class translation factor GTPase superfamily. Classic translation factor GTPase family. EF-Tu/EF-1A subfamily. As to quaternary structure, monomer.

It is found in the cytoplasm. It carries out the reaction GTP + H2O = GDP + phosphate + H(+). GTP hydrolase that promotes the GTP-dependent binding of aminoacyl-tRNA to the A-site of ribosomes during protein biosynthesis. The sequence is that of Elongation factor Tu 2 from Wolbachia sp. subsp. Brugia malayi (strain TRS).